The following is a 255-amino-acid chain: 3-hydroxyacyl-CoA dehydrogenase type-2 (255 aa).

NAD(+) contacts are provided by serine 14, leucine 16, aspartate 35, aspartate 58, valine 59, and cysteine 85. A substrate-binding site is contributed by serine 149. Residues tyrosine 162, lysine 166, phenylalanine 195, and threonine 197 each contribute to the NAD(+) site. The active-site Proton acceptor is tyrosine 162.

It belongs to the short-chain dehydrogenases/reductases (SDR) family. Component of mitochondrial ribonuclease P, a complex composed of rswl/MRPP1, scu/MRPP2 and mldr/MRPP3. Found in many tissues including CNS, imaginal disks and salivary glands. Highest expression in both embryonic gonadal primordia and mature ovaries and testes.

It is found in the mitochondrion. It catalyses the reaction a (3S)-3-hydroxyacyl-CoA + NAD(+) = a 3-oxoacyl-CoA + NADH + H(+). The enzyme catalyses (3S)-3-hydroxybutanoyl-CoA + NAD(+) = acetoacetyl-CoA + NADH + H(+). It carries out the reaction testosterone + NAD(+) = androst-4-ene-3,17-dione + NADH + H(+). The catalysed reaction is 5alpha-androstane-3alpha,17beta-diol + NAD(+) = 17beta-hydroxy-5alpha-androstan-3-one + NADH + H(+). It catalyses the reaction 17beta-estradiol + NAD(+) = estrone + NADH + H(+). The enzyme catalyses ursodeoxycholate + NAD(+) = 7-oxolithocholate + NADH + H(+). It carries out the reaction 3beta,7beta-dihydroxy-5beta-cholan-24-oate + NAD(+) = 3beta-hydroxy-7-oxo-5beta-cholan-24-oate + NADH + H(+). The catalysed reaction is 11-dehydrocorticosterone + NAD(+) = pregn-4-ene-3,11,20,21-tetraone + NADH + H(+). It catalyses the reaction cortisone + NAD(+) = 17alpha-hydroxypregn-4-en-3,11,20-trione-21-al + NADH + H(+). The enzyme catalyses cortisol + NAD(+) = 11beta,17alpha-dihydroxypregn-4-ene-3,20,21-trione + NADH + H(+). It carries out the reaction 5alpha-pregnan-20beta-ol-3-one + NAD(+) = 5alpha-pregnane-3,20-dione + NADH + H(+). The catalysed reaction is 17beta-hydroxy-5alpha-androstan-3-one + NAD(+) = 5alpha-androstan-3,17-dione + NADH + H(+). Mitochondrial dehydrogenase involved in pathways of fatty acid, and steroid metabolism. Versatile enzyme presenting two types of activity; L-3-hydroxyacyl-CoA dehydrogenase ((3S)-3-hydroxyacyl-CoA dehydrogenase) activity and hydroxysteroid dehydrogenase (HSD) activity with a wide substrate spectrum. As a (3S)-3-hydroxyacyl-CoA dehydrogenase, it functions in the third step of the fatty acid beta-oxidation pathway, a major metabolic process in which fatty acids are oxidized to provide a significant source of energy, while also generating acyl-CoA metabolites used by many metabolic routes. As a HSD, it functions in the degradation pathways of glucocorticoids and sex steroids and epimerization of bile acids; catalyzes the beta-oxidation at position 17 of androgens and estrogens, has 3-alpha-hydroxysteroid dehydrogenase activity with androsterone, and carries out oxidative conversions of 7-beta-hydroxylated bile acids like ursodeoxycholate or isoursodeoxycholate (also known as 3-beta,7-beta-dihydroxy-5-beta-cholan-24-oate or 7-beta-hydroxyisolithocholate, respectively). Also exhibits 20-beta-OH and 21-OH dehydrogenase activities with C21 steroids. Essential for structural and functional integrity of mitochondria. Required for cell survival during embryonic development. May play a role in germline formation. In terms of biological role, in addition to mitochondrial dehydrogenase activity, moonlights as a component of mitochondrial ribonuclease P, a complex that cleaves tRNA molecules in their 5'-ends. Essential for the structural and functional integrity of mitochondria. Function is essential for pupal development. The chain is 3-hydroxyacyl-CoA dehydrogenase type-2 from Drosophila melanogaster (Fruit fly).